A 629-amino-acid polypeptide reads, in one-letter code: (-)-alpha-pinene synthase, chloroplastic (629 aa).

A chloroplast-targeting transit peptide spans 1-48; the sequence is MSPVSVISLPSDLCLPTSFIDRSGRELIPLHITIPNVAMRRQGKLMTR. Mg(2+) is bound by residues D380, D384, and D532. The short motif at 380-384 is the DDXXD motif element; that stretch reads DDMYD. A K(+)-binding site is contributed by S540.

Belongs to the terpene synthase family. Tpsd subfamily. It depends on Mg(2+) as a cofactor. The cofactor is Mn(2+). K(+) serves as cofactor.

Its subcellular location is the plastid. The protein localises to the chloroplast. The catalysed reaction is (2E)-geranyl diphosphate = (1S,5S)-alpha-pinene + diphosphate. Its pathway is terpene metabolism; oleoresin biosynthesis. Involved in defensive oleoresin formation in conifers in response to insect attack or other injury. Involved in monoterpene (C10) olefins biosynthesis. Produces mainly (-)-alpha-pinene (79%) and lesser amounts of (-)-beta-pinene (4.2%), nearly racemic mixtures of camphene (2.8% (+)/2.2% (-)) and limonene (2.4% (+)/3.7% (-)), as well as small amounts of (+)-alpha-pinene (3.3%) and (+)-beta-pinene (2.4%). This is (-)-alpha-pinene synthase, chloroplastic (PT1) from Pinus taeda (Loblolly pine).